The sequence spans 940 residues: Isoleucine--tRNA ligase (940 aa).

Residues 58–68 carry the 'HIGH' region motif; the sequence is PYANGSIHIGH. Glu564 contributes to the L-isoleucyl-5'-AMP binding site. The 'KMSKS' region motif lies at 605 to 609; that stretch reads KMSKS. Lys608 provides a ligand contact to ATP. The Zn(2+) site is built by Cys903, Cys906, Cys923, and Cys926.

The protein belongs to the class-I aminoacyl-tRNA synthetase family. IleS type 1 subfamily. As to quaternary structure, monomer. Zn(2+) serves as cofactor.

Its subcellular location is the cytoplasm. The catalysed reaction is tRNA(Ile) + L-isoleucine + ATP = L-isoleucyl-tRNA(Ile) + AMP + diphosphate. In terms of biological role, catalyzes the attachment of isoleucine to tRNA(Ile). As IleRS can inadvertently accommodate and process structurally similar amino acids such as valine, to avoid such errors it has two additional distinct tRNA(Ile)-dependent editing activities. One activity is designated as 'pretransfer' editing and involves the hydrolysis of activated Val-AMP. The other activity is designated 'posttransfer' editing and involves deacylation of mischarged Val-tRNA(Ile). This is Isoleucine--tRNA ligase from Shewanella sediminis (strain HAW-EB3).